We begin with the raw amino-acid sequence, 409 residues long: MASGKATGKTDAPAPVIKLGGPKPPKVGSSGNASWFQAIKAKKLNSPQPKFEGSGVPDNENLKTSQQHGYWRRQLRFKPSKGGRKPVPDAWYFYYTGTGPAADLNWGDSQDGIVWVAAKGADVKSRSNQGTRDPDKFDQYPLRFSDGGPDGNFRWDFIPLNRGRSGRSTAASSAASSRAPSRDGSRGRRSGSEGDLIARAAKIIQDQQKRGSRITKAKADEMAHRRYCKRTIPPGYKVDQVFGPRTKGKEGNFGDDKMNEEGIKDGRVTAMLNLVPSSHACLFGSRVTPKLQPDGLHLKIEFTTVVSRDDPQFDNYVKICDQCVDGVGTRPKDDEPRPKSRSSSRPATRTSSPALRQQPQKKEKKPKKQDDEVDKALTSDEERNNAQLEFDDEPKVINWGDSALGENEL.

Disordered stretches follow at residues 1–32 (MASG…SSGN), 44–69 (LNSP…QQHG), 121–145 (ADVK…LRFS), 164–195 (RSGR…SEGD), and 238–259 (VDQV…DKMN). Over residues 15–31 (PVIKLGGPKPPKVGSSG) the composition is skewed to low complexity. Residues 29 to 160 (SSGNASWFQA…GNFRWDFIPL (132 aa)) form an RNA-binding region. The region spanning 31–156 (GNASWFQAIK…GGPDGNFRWD (126 aa)) is the CoV N NTD domain. Over residues 164–179 (RSGRSTAASSAASSRA) the composition is skewed to low complexity. Composition is skewed to basic and acidic residues over residues 180–192 (PSRD…RSGS) and 247–259 (KGKE…DKMN). Residues Ser-190 and Ser-192 each carry the phosphoserine; by host modification. The 117-residue stretch at 215 to 331 (TKAKADEMAH…QCVDGVGTRP (117 aa)) folds into the CoV N CTD domain. A dimerization region spans residues 226-333 (RYCKRTIPPG…VDGVGTRPKD (108 aa)). A disulfide bridge links Cys-320 with Cys-323. The disordered stretch occupies residues 326-409 (GVGTRPKDDE…GDSALGENEL (84 aa)). A compositionally biased stretch (low complexity) spans 341–358 (RSSSRPATRTSSPALRQQ). The segment covering 368 to 384 (KQDDEVDKALTSDEERN) has biased composition (basic and acidic residues). At Thr-378 the chain carries Phosphothreonine; by host. At Ser-379 the chain carries Phosphoserine; by host.

It belongs to the gammacoronavirus nucleocapsid protein family. Homooligomer. Both monomeric and oligomeric forms interact with RNA. Interacts with protein M. Interacts with NSP3; this interaction serves to tether the genome to the newly translated replicase-transcriptase complex at a very early stage of infection. In terms of processing, ADP-ribosylated. The ADP-ribosylation is retained in the virion during infection. Post-translationally, phosphorylated on serine and threonine residues.

The protein resides in the virion. The protein localises to the host endoplasmic reticulum-Golgi intermediate compartment. It localises to the host Golgi apparatus. In terms of biological role, packages the positive strand viral genome RNA into a helical ribonucleocapsid (RNP) and plays a fundamental role during virion assembly through its interactions with the viral genome and membrane protein M. Plays an important role in enhancing the efficiency of subgenomic viral RNA transcription as well as viral replication. This Gallus gallus (Chicken) protein is Nucleoprotein.